A 367-amino-acid chain; its full sequence is GDSL esterase/lipase 3 (367 aa).

The first 23 residues, 1–23 (MVRLVLIIFFVYTIILSIGSINC), serve as a signal peptide directing secretion. Ser42 serves as the catalytic Nucleophile. N-linked (GlcNAc...) asparagine glycans are attached at residues Asn175, Asn194, and Asn321. Residues Asp329 and His332 contribute to the active site. N-linked (GlcNAc...) asparagine glycosylation occurs at Asn351.

The protein belongs to the 'GDSL' lipolytic enzyme family.

It localises to the secreted. In Arabidopsis thaliana (Mouse-ear cress), this protein is GDSL esterase/lipase 3 (GLIP3).